The sequence spans 156 residues: Protein LlR18B (156 aa).

The trans-zeatin site is built by Asp8 and Asp28. Residues Pro32 and Ile38 each coordinate Ca(2+). Trans-zeatin-binding residues include Lys54, Glu133, and Lys136.

The protein belongs to the BetVI family. In terms of tissue distribution, ubiquitous, with higher levels in roots.

Its subcellular location is the cytoplasm. The protein resides in the cytosol. Class II ribonuclease (RNase), with low activity on single-strand RNA. Binds to cytokinins. Interacts with melatonin. The protein is Protein LlR18B (LLR18B) of Lupinus luteus (European yellow lupine).